Here is a 296-residue protein sequence, read N- to C-terminus: Phosphatidylglycerol--prolipoprotein diacylglyceryl transferase (296 aa).

The tract at residues methionine 1–leucine 21 is disordered. The next 7 membrane-spanning stretches (helical) occupy residues glycine 34 to isoleucine 54, glutamate 72 to threonine 92, phenylalanine 108 to isoleucine 128, glycine 136 to arginine 158, phenylalanine 195 to tryptophan 215, leucine 227 to glutamate 243, and leucine 258 to glutamine 278. Arginine 158 contributes to the a 1,2-diacyl-sn-glycero-3-phospho-(1'-sn-glycerol) binding site.

The protein belongs to the Lgt family.

The protein localises to the cell membrane. The catalysed reaction is L-cysteinyl-[prolipoprotein] + a 1,2-diacyl-sn-glycero-3-phospho-(1'-sn-glycerol) = an S-1,2-diacyl-sn-glyceryl-L-cysteinyl-[prolipoprotein] + sn-glycerol 1-phosphate + H(+). It functions in the pathway protein modification; lipoprotein biosynthesis (diacylglyceryl transfer). Its function is as follows. Catalyzes the transfer of the diacylglyceryl group from phosphatidylglycerol to the sulfhydryl group of the N-terminal cysteine of a prolipoprotein, the first step in the formation of mature lipoproteins. The polypeptide is Phosphatidylglycerol--prolipoprotein diacylglyceryl transferase (Cutibacterium acnes (strain DSM 16379 / KPA171202) (Propionibacterium acnes)).